The primary structure comprises 125 residues: Large ribosomal subunit protein bL12 (125 aa).

The protein belongs to the bacterial ribosomal protein bL12 family. In terms of assembly, homodimer. Part of the ribosomal stalk of the 50S ribosomal subunit. Forms a multimeric L10(L12)X complex, where L10 forms an elongated spine to which 2 to 4 L12 dimers bind in a sequential fashion. Binds GTP-bound translation factors.

Functionally, forms part of the ribosomal stalk which helps the ribosome interact with GTP-bound translation factors. Is thus essential for accurate translation. The chain is Large ribosomal subunit protein bL12 from Helicobacter pylori (strain P12).